Consider the following 419-residue polypeptide: Histidine--tRNA ligase (419 aa).

It belongs to the class-II aminoacyl-tRNA synthetase family. As to quaternary structure, homodimer.

The protein resides in the cytoplasm. It carries out the reaction tRNA(His) + L-histidine + ATP = L-histidyl-tRNA(His) + AMP + diphosphate + H(+). In Desulfatibacillum aliphaticivorans, this protein is Histidine--tRNA ligase.